A 214-amino-acid polypeptide reads, in one-letter code: Cdc42 effector protein 2 (214 aa).

Ser2 carries the post-translational modification N-acetylserine. One can recognise a CRIB domain in the interval 30–44 (ISPPLGDFRHTIHIG). A phosphoserine mark is found at Ser31, Ser101, Ser137, Ser141, and Ser145. A disordered region spans residues 118–151 (ALTLPTTQAPPKPPRLHLESPQPSPKSSPQEAGN).

This sequence belongs to the BORG/CEP family. As to quaternary structure, interacts with CDC42 and RHOQ, in a GTP-dependent manner, and with SEPT7.

It is found in the endomembrane system. Its subcellular location is the cytoplasm. It localises to the cytoskeleton. In terms of biological role, probably involved in the organization of the actin cytoskeleton. May act downstream of CDC42 to induce actin filament assembly leading to cell shape changes. Induces pseudopodia formation in fibroblasts in a CDC42-dependent manner. The polypeptide is Cdc42 effector protein 2 (Cdc42ep2) (Rattus norvegicus (Rat)).